Consider the following 366-residue polypeptide: D-alanine--D-alanine ligase (366 aa).

Positions 149-358 (KIAFDHAGLP…FSELVDTLIQ (210 aa)) constitute an ATP-grasp domain. Position 185-240 (185-240 (ETTLEYPCFVKPANLGSSVGIAKVRSRSELETALDNAASYDRRIIVEAGVEAKELE)) interacts with ATP. Asp-311, Glu-325, and Asn-327 together coordinate Mg(2+).

Belongs to the D-alanine--D-alanine ligase family. The cofactor is Mg(2+). Requires Mn(2+) as cofactor.

The protein localises to the cytoplasm. The enzyme catalyses 2 D-alanine + ATP = D-alanyl-D-alanine + ADP + phosphate + H(+). It functions in the pathway cell wall biogenesis; peptidoglycan biosynthesis. Its function is as follows. Cell wall formation. This is D-alanine--D-alanine ligase from Trichodesmium erythraeum (strain IMS101).